The primary structure comprises 335 residues: Large ribosomal subunit protein uL10 (335 aa).

Positions 304–335 are disordered; sequence GAAAPVEEAPVEEKKEEKKEEAAPAAGLGMLF. Positions 314 to 325 are enriched in basic and acidic residues; it reads VEEKKEEKKEEA.

This sequence belongs to the universal ribosomal protein uL10 family. In terms of assembly, part of the 50S ribosomal subunit. Forms part of the ribosomal stalk which helps the ribosome interact with GTP-bound translation factors. Forms a heptameric L10(L12)2(L12)2(L12)2 complex, where L10 forms an elongated spine to which the L12 dimers bind in a sequential fashion.

In terms of biological role, forms part of the ribosomal stalk, playing a central role in the interaction of the ribosome with GTP-bound translation factors. This is Large ribosomal subunit protein uL10 from Methanococcus maripaludis (strain C6 / ATCC BAA-1332).